The primary structure comprises 92 residues: Transcription factor PRE4 (92 aa).

The bHLH domain maps to 5-60; it reads KSRSRQTGASMITDEQINDLVLQLHRLLPELANNRRSGKVSASRVLQETCSYIRNL.

This sequence belongs to the bHLH protein family. Interacts with HFR1 and IBH1. As to expression, expressed in roots, leaves, stems and flowers.

It is found in the nucleus. Atypical and probable non DNA-binding bHLH transcription factor that integrates multiple signaling pathways to regulate cell elongation and plant development. Regulates light responses by binding and inhibiting the activity of the bHLH transcription factor HFR1, a critical regulator of light signaling and shade avoidance. May have a regulatory role in various aspects of gibberellin-dependent growth and development. The protein is Transcription factor PRE4 (PRE4) of Arabidopsis thaliana (Mouse-ear cress).